We begin with the raw amino-acid sequence, 436 residues long: MDRSEGMDTLENSMPSGMSMGMTMGGHQGHPPPDIKPDISSLTSPTSTHGYYGFGPGGMPSMASSTQPSPGPQQMHSPGMHSPTSSMGSPPMLCLSPSGPSPSPGLPHSSLHTKHICAICGDRASGKHYGVYSCEGCKGFFKRTVRKDLTYACRDDKNCMIDKRQRNRCQYCRYMKCLSMGMKREAVQEERQRVKEKGDGEVESTSGANNDMPVEQILEAELAVDPKIDTYIDAQKDPVTNICQAADKQLFTLVEWAKRIPHFTELPLEDQVILLRAGWNELLIAGFSHRSIMAKDGILLATGLHVHRSSAHQAGVGTIFDRVLTELVAKMRDMKMDKTELGCLRAVVLFNPDAKGLTAVQEVEQLREKVYASLEEYTKSRYPEEPGRFAKLLLRLPALRSIGLKCLEHLFFFKLIGDQPIDTFLMEMLENPSPAT.

The interval 1–108 is disordered; the sequence is MDRSEGMDTL…GPSPSPGLPH (108 aa). Residues 1–116 form a modulating region; sequence MDRSEGMDTL…PHSSLHTKHI (116 aa). Residues 13–22 show a composition bias toward low complexity; the sequence is SMPSGMSMGM. 2 stretches are compositionally biased toward polar residues: residues 40–49 and 62–76; these read SSLTSPTSTH and MASSTQPSPGPQQMH. Residues 85–98 are compositionally biased toward low complexity; that stretch reads SSMGSPPMLCLSPS. NR C4-type zinc fingers lie at residues 117 to 137 and 153 to 172; these read CAICGDRASGKHYGVYSCEGC and CRDDKNCMIDKRQRNRCQYC. Positions 117 to 182 form a DNA-binding region, nuclear receptor; that stretch reads CAICGDRASG…RYMKCLSMGM (66 aa). A hinge region spans residues 183–206; it reads KREAVQEERQRVKEKGDGEVESTS. The span at 189 to 200 shows a compositional bias: basic and acidic residues; sequence EERQRVKEKGDG. The segment at 189 to 209 is disordered; the sequence is EERQRVKEKGDGEVESTSGAN. The 224-residue stretch at 209-432 folds into the NR LBD domain; that stretch reads NNDMPVEQIL…TFLMEMLENP (224 aa). 9-cis-retinoate-binding residues include R290 and A301.

This sequence belongs to the nuclear hormone receptor family. NR2 subfamily. In terms of assembly, homodimer (via ligand-binding domain). Heterodimer. Homotetramer consisting of 2 canonical homodimers. Within the tetramer, each monomer binds one molecule of 9C-RA and a NCOA1-derived peptide containing an L-X(2)-L-L motif.

The protein resides in the nucleus. Functionally, ligand-dependent transcription factor probably involved in the retinoic acid response pathway. Binds 9-cis-retinoic acid (9C-RA) and, to a lesser extent, docosahexaenoic acid (DHA), phytanic acid, methoprene acid and oleic acid. Binds to double-stranded DNA sequences containing direct repeats (DR) with the consensus sequence 5'-[AG]GGTCA-3' and 1, 2, 3, 4 or 5 nucleotides in between (DR1, DR2, DR3. DR4 and DR5, respectively). Binding to DR1 is strongest. Transactivates gene expression when 9C-RA or DHA is bound. This is Retinoic acid receptor RXR from Biomphalaria glabrata (Bloodfluke planorb).